The following is a 144-amino-acid chain: GYVNGLESAEETLAENRESGDFGSSAAAMGNVTHNGCGHYLHTLFWENMDPNGGGEPEGELLDRIEEDFGSYEGWKGEFEAAASAAGGWALLVYDPVAKQLRNVPVDKHDQGALWGSHPILALDVWEHSYYYDYGPARGDFIDA.

The interval 1 to 22 (GYVNGLESAEETLAENRESGDF) is disordered. Mn(2+)-binding residues include His-42, Asp-124, and His-128.

It belongs to the iron/manganese superoxide dismutase family. The cofactor is Mn(2+).

The catalysed reaction is 2 superoxide + 2 H(+) = H2O2 + O2. Functionally, destroys superoxide anion radicals which are normally produced within the cells and which are toxic to biological systems. In Haloarcula hispanica, this protein is Superoxide dismutase [Mn] (sod).